The primary structure comprises 265 residues: Cytosolic Fe-S cluster assembly factor NUBP2 homolog (265 aa).

ATP is bound at residue 22–29; the sequence is GKGGVGKS. 2 residues coordinate [4Fe-4S] cluster: Cys-196 and Cys-199.

The protein belongs to the Mrp/NBP35 ATP-binding proteins family. NUBP2/CFD1 subfamily. Heterotetramer of 2 NUBP1 and 2 NUBP2 chains. [4Fe-4S] cluster is required as a cofactor.

The protein resides in the cytoplasm. Component of the cytosolic iron-sulfur (Fe/S) protein assembly (CIA) machinery. Required for maturation of extramitochondrial Fe-S proteins. The NUBP1-NUBP2 heterotetramer forms a Fe-S scaffold complex, mediating the de novo assembly of an Fe-S cluster and its transfer to target apoproteins. This Trichoplax adhaerens (Trichoplax reptans) protein is Cytosolic Fe-S cluster assembly factor NUBP2 homolog.